Here is a 198-residue protein sequence, read N- to C-terminus: Recombination protein RecR (198 aa).

The C4-type zinc finger occupies 57–72 (CSVCGHITDRDPCYIC). A Toprim domain is found at 80 to 175 (SVVCVVQEPK…KVTRIAHGLP (96 aa)).

Belongs to the RecR family.

May play a role in DNA repair. It seems to be involved in an RecBC-independent recombinational process of DNA repair. It may act with RecF and RecO. The polypeptide is Recombination protein RecR (Bacillus thuringiensis (strain Al Hakam)).